An 815-amino-acid chain; its full sequence is Protein SEY1 homolog (815 aa).

Residues 1–737 lie on the Cytoplasmic side of the membrane; sequence MRQIIDYDCN…IQSTGRQPQN (737 aa). The GB1/RHD3-type G domain maps to 28–260; the sequence is TLGFNVISIL…LPKDYTRRIP (233 aa). 38–45 lines the GTP pocket; the sequence is GCQSTGKS. Residues 298–321 are a coiled coil; sequence AKDDILDGYKKSIKDLQKKMEKRE. A helical transmembrane segment spans residues 738-758; sequence IPWWIYLLIIILGFDEITYVL. The Lumenal portion of the chain corresponds to 759-761; it reads TSP. Residues 762–782 form a helical membrane-spanning segment; the sequence is VLVTLLLLLASFIYSYLTGNF. Topologically, residues 783–815 are cytoplasmic; the sequence is SSFCNYSQQFVIISTKILHYISGAIHSSLDNRK.

This sequence belongs to the TRAFAC class dynamin-like GTPase superfamily. GB1/RHD3 GTPase family. RHD3 subfamily.

The protein localises to the endoplasmic reticulum membrane. Its function is as follows. Probable GTP-binding protein that may be involved in cell development. This Cryptosporidium hominis protein is Protein SEY1 homolog.